The primary structure comprises 524 residues: Anthranilate synthase component 1 (524 aa).

L-tryptophan contacts are provided by residues Ser55 and 297-299 (PYM). Residue 332 to 333 (GT) participates in chorismate binding. Glu359 serves as a coordination point for Mg(2+). Chorismate contacts are provided by residues Tyr447, Arg467, 485 to 487 (GAG), and Gly487. A Mg(2+)-binding site is contributed by Glu500.

This sequence belongs to the anthranilate synthase component I family. In terms of assembly, heterotetramer consisting of two non-identical subunits: a beta subunit (TrpG) and a large alpha subunit (TrpE). It depends on Mg(2+) as a cofactor.

The enzyme catalyses chorismate + L-glutamine = anthranilate + pyruvate + L-glutamate + H(+). Its pathway is amino-acid biosynthesis; L-tryptophan biosynthesis; L-tryptophan from chorismate: step 1/5. Feedback inhibited by tryptophan. In terms of biological role, part of a heterotetrameric complex that catalyzes the two-step biosynthesis of anthranilate, an intermediate in the biosynthesis of L-tryptophan. In the first step, the glutamine-binding beta subunit (TrpG) of anthranilate synthase (AS) provides the glutamine amidotransferase activity which generates ammonia as a substrate that, along with chorismate, is used in the second step, catalyzed by the large alpha subunit of AS (TrpE) to produce anthranilate. In the absence of TrpG, TrpE can synthesize anthranilate directly from chorismate and high concentrations of ammonia. In Haloferax volcanii (strain ATCC 29605 / DSM 3757 / JCM 8879 / NBRC 14742 / NCIMB 2012 / VKM B-1768 / DS2) (Halobacterium volcanii), this protein is Anthranilate synthase component 1 (trpE).